A 412-amino-acid polypeptide reads, in one-letter code: DNA replication and repair protein RecF (412 aa).

30–37 contacts ATP; it reads GKNGLGKT.

The protein belongs to the RecF family.

The protein resides in the cytoplasm. Functionally, the RecF protein is involved in DNA metabolism; it is required for DNA replication and normal SOS inducibility. RecF binds preferentially to single-stranded, linear DNA. It also seems to bind ATP. This is DNA replication and repair protein RecF from Bifidobacterium longum subsp. infantis (strain ATCC 15697 / DSM 20088 / JCM 1222 / NCTC 11817 / S12).